The primary structure comprises 461 residues: Cysteine--tRNA ligase (461 aa).

C30 contributes to the Zn(2+) binding site. The 'HIGH' region motif lies at 32–42; it reads VTVYDLCHIGH. The Zn(2+) site is built by C211, H236, and E240. The 'KMSKS' region motif lies at 268 to 272; sequence KMSKS. K271 serves as a coordination point for ATP.

Belongs to the class-I aminoacyl-tRNA synthetase family. As to quaternary structure, monomer. Requires Zn(2+) as cofactor.

It is found in the cytoplasm. The catalysed reaction is tRNA(Cys) + L-cysteine + ATP = L-cysteinyl-tRNA(Cys) + AMP + diphosphate. In Shewanella sp. (strain ANA-3), this protein is Cysteine--tRNA ligase.